The sequence spans 156 residues: MNINVTLIGQTVAFIIFVWFCMKFVWPPLMNAIEERQKRIADGLADADRAVKDLELAQAKATDQLKEAKATANEIIEQANKRKAQIVDEAKAEADAERAKIIAQGKAEIEAERNRVKEDLRKQVAALAIAGAEKILERSIDEAAHSDIVNKLVAEI.

Residues 5–25 (VTLIGQTVAFIIFVWFCMKFV) traverse the membrane as a helical segment.

Belongs to the ATPase B chain family. As to quaternary structure, F-type ATPases have 2 components, F(1) - the catalytic core - and F(0) - the membrane proton channel. F(1) has five subunits: alpha(3), beta(3), gamma(1), delta(1), epsilon(1). F(0) has three main subunits: a(1), b(2) and c(10-14). The alpha and beta chains form an alternating ring which encloses part of the gamma chain. F(1) is attached to F(0) by a central stalk formed by the gamma and epsilon chains, while a peripheral stalk is formed by the delta and b chains.

The protein resides in the cell inner membrane. In terms of biological role, f(1)F(0) ATP synthase produces ATP from ADP in the presence of a proton or sodium gradient. F-type ATPases consist of two structural domains, F(1) containing the extramembraneous catalytic core and F(0) containing the membrane proton channel, linked together by a central stalk and a peripheral stalk. During catalysis, ATP synthesis in the catalytic domain of F(1) is coupled via a rotary mechanism of the central stalk subunits to proton translocation. Functionally, component of the F(0) channel, it forms part of the peripheral stalk, linking F(1) to F(0). This chain is ATP synthase subunit b, found in Shewanella loihica (strain ATCC BAA-1088 / PV-4).